The chain runs to 536 residues: Lysosomal acid glucosylceramidase (536 aa).

A signal peptide spans 1-39 (MELSSPSREEYPMPRGRVGIMAASLMGLLLLHTVSWVSG). Disulfide bonds link Cys-43/Cys-55 and Cys-57/Cys-62. N-linked (GlcNAc...) asparagine glycosylation is found at Asn-58, Asn-98, Asn-185, and Asn-208. Glu-274 acts as the Proton donor in catalysis. Asn-309 carries N-linked (GlcNAc...) asparagine glycosylation. The Nucleophile role is filled by Glu-379. Asn-501 carries N-linked (GlcNAc...) asparagine glycosylation.

This sequence belongs to the glycosyl hydrolase 30 family. In terms of assembly, interacts with saposin-C. Interacts with SCARB2. Interacts with TCP1. Interacts with GRN; this interaction prevents aggregation of GBA1-SCARB2 complex via interaction with HSPA1A upon stress.

The protein resides in the lysosome membrane. The enzyme catalyses a beta-D-glucosyl-(1&lt;-&gt;1')-N-acylsphing-4-enine + H2O = an N-acylsphing-4-enine + D-glucose. It carries out the reaction a beta-D-galactosyl-(1&lt;-&gt;1')-N-acylsphing-4-enine + H2O = an N-acylsphing-4-enine + D-galactose. The catalysed reaction is cholesteryl 3-beta-D-glucoside + H2O = cholesterol + D-glucose. It catalyses the reaction a beta-D-glucosyl-(1&lt;-&gt;1')-N-acylsphing-4-enine + cholesterol = cholesteryl 3-beta-D-glucoside + an N-acylsphing-4-enine. The enzyme catalyses beta-D-glucosyl-N-(9Z-octadecenoyl)-sphing-4E-enine + cholesterol = N-(9Z-octadecenoyl)-sphing-4-enine + cholesteryl 3-beta-D-glucoside. It carries out the reaction beta-D-glucosyl-N-octanoylsphing-4E-enine + cholesterol = N-octanoylsphing-4-enine + cholesteryl 3-beta-D-glucoside. The catalysed reaction is beta-D-glucosyl-N-dodecanoylsphing-4-enine + cholesterol = N-dodecanoylsphing-4-enine + cholesteryl 3-beta-D-glucoside. It catalyses the reaction beta-D-glucosyl-(1&lt;-&gt;1)-N-octadecanoylsphing-4-enine + cholesterol = N-octadecanoylsphing-4-enine + cholesteryl 3-beta-D-glucoside. The enzyme catalyses beta-D-glucosyl-(1&lt;-&gt;1')-N-(15Z-tetracosenoyl)-sphing-4-enine + cholesterol = N-(15Z-tetracosenoyl)-sphing-4-enine + cholesteryl 3-beta-D-glucoside. It carries out the reaction a beta-D-galactosyl-(1&lt;-&gt;1')-N-acylsphing-4-enine + cholesterol = cholesteryl 3-beta-D-galactoside + an N-acylsphing-4-enine. The catalysed reaction is 1-(beta-D-galactosyl)-N-dodecanoylsphing-4-enine + cholesterol = cholesteryl 3-beta-D-galactoside + N-dodecanoylsphing-4-enine. It catalyses the reaction a beta-D-xylosyl-(1&lt;-&gt;1')-N-acylsphing-4-enine + cholesterol = cholesteryl 3-beta-D-xyloside + an N-acylsphing-4-enine. The enzyme catalyses beta-D-xylosyl-(1&lt;-&gt;1')-N-(9Z-octadecenoyl)-sphing-4-enine + cholesterol = cholesteryl 3-beta-D-xyloside + N-(9Z-octadecenoyl)-sphing-4-enine. It functions in the pathway steroid metabolism; cholesterol metabolism. The protein operates within sphingolipid metabolism. Glucosylceramidase that catalyzes, within the lysosomal compartment, the hydrolysis of glucosylceramides/GlcCers (such as beta-D-glucosyl-(1&lt;-&gt;1')-N-acylsphing-4-enine) into free ceramides (such as N-acylsphing-4-enine) and glucose. Plays a central role in the degradation of complex lipids and the turnover of cellular membranes. Through the production of ceramides, participates in the PKC-activated salvage pathway of ceramide formation. Catalyzes the glucosylation of cholesterol, through a transglucosylation reaction where glucose is transferred from GlcCer to cholesterol. GlcCer containing mono-unsaturated fatty acids (such as beta-D-glucosyl-N-(9Z-octadecenoyl)-sphing-4-enine) are preferred as glucose donors for cholesterol glucosylation when compared with GlcCer containing same chain length of saturated fatty acids (such as beta-D-glucosyl-N-octadecanoyl-sphing-4-enine). Under specific conditions, may alternatively catalyze the reverse reaction, transferring glucose from cholesteryl 3-beta-D-glucoside to ceramide. Can also hydrolyze cholesteryl 3-beta-D-glucoside producing glucose and cholesterol. Catalyzes the hydrolysis of galactosylceramides/GalCers (such as beta-D-galactosyl-(1&lt;-&gt;1')-N-acylsphing-4-enine), as well as the transfer of galactose between GalCers and cholesterol in vitro, but with lower activity than with GlcCers. Contrary to GlcCer and GalCer, xylosylceramide/XylCer (such as beta-D-xyosyl-(1&lt;-&gt;1')-N-acylsphing-4-enine) is not a good substrate for hydrolysis, however it is a good xylose donor for transxylosylation activity to form cholesteryl 3-beta-D-xyloside. This chain is Lysosomal acid glucosylceramidase (GBA1), found in Bos taurus (Bovine).